The sequence spans 865 residues: Xylosyltransferase 2 (865 aa).

Residues 1–15 (MVASARVQKLVRRYK) are Cytoplasmic-facing. A helical; Signal-anchor for type II membrane protein transmembrane segment spans residues 16–36 (LAIATALAILLLQGLVVWSFS). The Lumenal segment spans residues 37-865 (GLEEDEAGEK…GPVKADGRLR (829 aa)). The interval 41-157 (DEAGEKGRQR…EGAPQPTDNG (117 aa)) is disordered. The segment covering 53–65 (RPLDPGEGSKDTD) has biased composition (basic and acidic residues). The span at 73-82 (STGRRHGRWR) shows a compositional bias: basic residues. Asn-122 carries N-linked (GlcNAc...) asparagine glycosylation. Over residues 125-137 (GAAAGEALVGAAG) the composition is skewed to low complexity. Cystine bridges form between Cys-162-Cys-190, Cys-206-Cys-448, Cys-467-Cys-480, and Cys-469-Cys-478. Residues Val-239, Asp-267, and 296–298 (TIW) contribute to the UDP-alpha-D-xylose site. Asn-327 carries N-linked (GlcNAc...) asparagine glycosylation. A UDP-alpha-D-xylose-binding site is contributed by 400-401 (DW). UDP-alpha-D-xylose is bound by residues Ser-481 and 504-505 (RK). 2 disulfide bridges follow: Cys-581–Cys-833 and Cys-826–Cys-839. Asn-683 carries N-linked (GlcNAc...) asparagine glycosylation. A disordered region spans residues 846 to 865 (SLSPDPKSELGPVKADGRLR).

The protein belongs to the glycosyltransferase 14 family. XylT subfamily. In terms of assembly, monomer. Mg(2+) is required as a cofactor. Mn(2+) serves as cofactor. Contains disulfide bonds.

The protein localises to the golgi apparatus membrane. It is found in the secreted. The catalysed reaction is UDP-alpha-D-xylose + L-seryl-[protein] = 3-O-(beta-D-xylosyl)-L-seryl-[protein] + UDP + H(+). Its pathway is glycan metabolism; chondroitin sulfate biosynthesis. The protein operates within glycan metabolism; heparan sulfate biosynthesis. Its function is as follows. Catalyzes the first step in the biosynthesis of chondroitin sulfate, heparan sulfate and dermatan sulfate proteoglycans, such as DCN. Transfers D-xylose from UDP-D-xylose to specific serine residues of the core protein. This chain is Xylosyltransferase 2 (XYLT2), found in Pan troglodytes (Chimpanzee).